Reading from the N-terminus, the 232-residue chain is Large ribosomal subunit protein uL1 (232 aa).

Belongs to the universal ribosomal protein uL1 family. Part of the 50S ribosomal subunit.

Functionally, binds directly to 23S rRNA. The L1 stalk is quite mobile in the ribosome, and is involved in E site tRNA release. In terms of biological role, protein L1 is also a translational repressor protein, it controls the translation of the L11 operon by binding to its mRNA. This chain is Large ribosomal subunit protein uL1, found in Azobacteroides pseudotrichonymphae genomovar. CFP2.